Consider the following 919-residue polypeptide: GPI ethanolamine phosphate transferase 1 (919 aa).

The Cytoplasmic segment spans residues 1–9; sequence MWNKTRTTL. A helical transmembrane segment spans residues 10–30; sequence LAVGVLFHLFYLWSIFDIYFI. The Lumenal portion of the chain corresponds to 31–457; the sequence is SPLVHGMSPY…TTYNWRFIRT (427 aa). Asn90, Asn138, Asn198, Asn202, Asn286, and Asn312 each carry an N-linked (GlcNAc...) asparagine glycan. The helical transmembrane segment at 458–478 threads the bilayer; sequence IVTFGFVGWIFFSFIIFLKSF. Over 479–488 the chain is Cytoplasmic; that stretch reads ILENVIDDQK. A helical transmembrane segment spans residues 489-509; that stretch reads ASPLSHAVFGSIGILLNWILF. Residues 510 to 512 are Lumenal-facing; that stretch reads YQH. A helical membrane pass occupies residues 513–533; sequence SPFNFYMYLLFPLYFWSYIFT. At 534–553 the chain is on the cytoplasmic side; the sequence is NRSVLRSGIKEFFKGTSPWK. A helical transmembrane segment spans residues 554–574; it reads RVLITISIISVYEGIVYGFFH. The Lumenal portion of the chain corresponds to 575–576; it reads RW. Residues 577–597 form a helical membrane-spanning segment; the sequence is TFTLITNILAFYPFICGVREL. Position 598 (Ser598) is a topological domain, cytoplasmic. The chain crosses the membrane as a helical span at residues 599 to 619; the sequence is VNILWIITSVLLSTFTLFDAV. The Lumenal portion of the chain corresponds to 620–626; it reads KIEDLNQ. Residues 627-647 traverse the membrane as a helical segment; the sequence is IHLAGLLIILSAFYALYKIHS. Residues 648–655 are Cytoplasmic-facing; the sequence is RINSYTRA. Residues 656–676 form a helical membrane-spanning segment; the sequence is IFAIQISLVAAMLAVTHRSVI. Residues 677–687 lie on the Lumenal side of the membrane; that stretch reads SLQLRQGLPRE. Residues 688-708 form a helical membrane-spanning segment; it reads SQVAGWIIFFVSLFVMPILHY. The Cytoplasmic segment spans residues 709-720; sequence RKPNNDYKVRLL. Residues 721-741 form a helical membrane-spanning segment; the sequence is IIYLTFAPSFIILTISFESLF. The Lumenal portion of the chain corresponds to 742-776; the sequence is YFLFTSYMVQWIEIENKIKEMKTQKDENWLQVLRV. The chain crosses the membrane as a helical span at residues 777–797; the sequence is SVIGFFLLQVAFFGTGNVASI. Residues 798-807 lie on the Cytoplasmic side of the membrane; sequence SSFSLESVCR. A helical membrane pass occupies residues 808 to 828; it reads LLPIFDPFLMGALLMLKLIIP. Topologically, residues 829–848 are lumenal; it reads YGLLSTCLGILNLKLNFKDY. A helical membrane pass occupies residues 849-869; the sequence is TISSLIISMSDILSLNFFYLL. Residues 870-885 lie on the Cytoplasmic side of the membrane; that stretch reads RTEGSWLDIGITISNY. The chain crosses the membrane as a helical span at residues 886-906; the sequence is CLAILSSLFMLILEVLGHVLL. The Lumenal portion of the chain corresponds to 907–919; it reads KNVIIQDKTKKTQ.

The protein belongs to the PIGG/PIGN/PIGO family. PIGN subfamily. In terms of assembly, interacts with CSF1; CSF1 channels phosphatidylethanolamine to MCD4 in the endoplasmic reticulum at contact sites to support GPI anchor biosynthesis. In terms of processing, N-glycosylated.

The protein localises to the endoplasmic reticulum membrane. It is found in the golgi apparatus membrane. It localises to the vacuole membrane. The protein operates within glycolipid biosynthesis; glycosylphosphatidylinositol-anchor biosynthesis. Its function is as follows. Ethanolamine phosphate transferase involved in glycosylphosphatidylinositol-anchor biosynthesis. Transfers ethanolamine phosphate to the first alpha-1,4-linked mannose of the glycosylphosphatidylinositol precursor of GPI-anchor. Ethanolamine phosphate on the alpha-1,4-linked mannose is essential for further mannosylation by GPI10 and is necessary for an efficient recognition of GPI lipids and GPI proteins by the GPI transamidase, for the efficient transport of GPI anchored proteins from endoplasmic reticulum to Golgi and for the physiological incorporation of ceramides into GPI anchors by lipid remodeling. Also involved in non-mitochondrial ATP movements across membrane and participates in Golgi and endoplasmic reticulum function, Also required for the incorporation of BGL2 into the cell wall. The polypeptide is GPI ethanolamine phosphate transferase 1 (MCD4) (Saccharomyces cerevisiae (strain ATCC 204508 / S288c) (Baker's yeast)).